Here is a 166-residue protein sequence, read N- to C-terminus: Calmodulin-like protein 5 (166 aa).

EF-hand domains are found at residues 11 to 46 (EQVA…LGQT), 47 to 82 (PTRE…KASR), 96 to 131 (AADE…LGEK), and 132 to 166 (LTDE…LSDQ). 14 residues coordinate Ca(2+): Asp24, Asp26, Asp28, Cys30, Glu35, Asp60, Asp62, Asn64, Thr66, Glu71, Asp109, Asp111, Asp113, and Glu120. The residue at position 131 (Lys131) is an N6,N6,N6-trimethyllysine. Residues Asp145, Asp147, Asp149, Gln151, and Glu156 each coordinate Ca(2+).

This sequence belongs to the calmodulin family.

Its function is as follows. Potential calcium sensor. The sequence is that of Calmodulin-like protein 5 (CML5) from Oryza sativa subsp. japonica (Rice).